The primary structure comprises 1020 residues: MTEGRRCQVHLLDDRKLELLVQPKLLAKELLDLVASHFNLKEKEYFGIAFTDETGHLNWLQLDRRVLEHDFPKKSGPVVLYFCVRFYIESISYLKDNATIELFFLNAKSCIYKELIDVDSEVVFELASYILQEAKGDFSSNEVVRSDLKKLPALPTQALKEHPSLAYCEDRVIEYYKKLNGQTRGQAIVNYMSIVESLPTYGVHYYAVKDKQGIPWWLGLSYKGIFQYDYHDKVKPRKIFQWRQLENLYFREKKFSVEVHDPRRASVTRRTFGHSGIAVHTWYACPALIKSIWAMAISQHQFYLDRKQSKSKIHAARSLSEIAIDLTETGTLKTSKLANMGSKGKIISGSSGSLLSSGSQESDSSQSAKKDMLAALKSRQEALEETLRQRLEELKRLCLREAELTGKLPVEYPLDPGEEPPIVRRRIGTAFKLDEQKILPKGEEAELERLEREFAIQSQITEAARRLASDPNVSKKLKKQRKTSYLNALKKLQEIENAINENRIKSGKKPTQRASLVIDDGNIASEDSSLSDALVLEDEDSQVTSTISPLQSPHKGLPPRPPSSHNRPPPPQSLEGLRQLHYHRTDYDKSPLKPKMWSESSLDEPYEKVKKRSSHGHSSSHKRFPSTGSCTEAGVSSSLQNSPIRSLPHWNSQSSMPSTPDLRVRSPHYVHSTRSVDISPTRLHSLALHFRHRSSSLESQGKLLGSENDTGSPDFYTPRTRSSNGSDPMDDCSSCTSHSSSEHYYPAQMNANYSTLAEDSPSKARQRQRQRQRAAGALGSASSGSMPNLAARSGAASTGGGVYLHSQSQPSSQYRIKEYPLYIEGSATPVVVRSLESDQEGHYSVKAQFKTSNSYTAGGLFKESWRGGGDEGDAGRLTPSRSQILRTPSLGRDGAHDKGSGRAAVSDELRQWYQRSTASHKEHSRLSHTSSTSSDSGSQYSTSSQSTFVAHSRVTRMPQMCKATSAALPQSQRSSTPSSEIGATPPSSPHHILTWQTGEATENSPIMDGSESPTHQSTDE.

The FERM domain maps to 5-307; that stretch reads RRCQVHLLDD…SQHQFYLDRK (303 aa). Residues 343–405 form a necessary for interaction with CYTH1 region; it reads KGKIISGSSG…RLCLREAELT (63 aa). The segment covering 351–367 has biased composition (low complexity); it reads SGSLLSSGSQESDSSQS. Positions 351 to 371 are disordered; the sequence is SGSLLSSGSQESDSSQSAKKD. A coiled-coil region spans residues 367–401; the sequence is SAKKDMLAALKSRQEALEETLRQRLEELKRLCLRE. At Ser515 the chain carries Phosphoserine. The segment at 538–665 is disordered; that stretch reads DEDSQVTSTI…MPSTPDLRVR (128 aa). Over residues 542-551 the composition is skewed to polar residues; that stretch reads QVTSTISPLQ. The segment covering 556 to 572 has biased composition (pro residues); the sequence is GLPPRPPSSHNRPPPPQ. Residues 565 to 920 form a necessary for tight junction and adherens junction localization; Requires for interaction with PARD3 region; that stretch reads HNRPPPPQSL…QWYQRSTASH (356 aa). 2 positions are modified to phosphoserine: Ser590 and Ser601. Over residues 609–624 the composition is skewed to basic residues; that stretch reads VKKRSSHGHSSSHKRF. Residues 626–658 are compositionally biased toward polar residues; it reads STGSCTEAGVSSSLQNSPIRSLPHWNSQSSMPS. Phosphoserine occurs at positions 666 and 696. Disordered regions lie at residues 698 to 741 and 757 to 810; these read ESQG…HSSS and AEDS…QSQP. Residues 773–796 show a composition bias toward low complexity; the sequence is RAAGALGSASSGSMPNLAARSGAA. Phosphoserine occurs at positions 785, 854, and 882. 2 disordered regions span residues 862–949 and 961–1020; these read KESW…STFV and CKAT…STDE. Basic and acidic residues predominate over residues 893-910; sequence DGAHDKGSGRAAVSDELR. A compositionally biased stretch (low complexity) spans 927–947; it reads SHTSSTSSDSGSQYSTSSQST. Composition is skewed to polar residues over residues 967–981, 994–1004, and 1011–1020; these read ALPQ…SSEI, TWQTGEATENS, and ESPTHQSTDE.

Interacts (via coiled-coil domain) with CYTH1 (via coiled-coil domain). Interacts with PARD3 (via coiled-coil domain). Found in a complex with PARD3, CYTH1 and FRMD4A. Interacts with CYTH2. Interacts with CYTH3.

The protein resides in the cytoplasm. The protein localises to the cytoskeleton. Its subcellular location is the cell junction. It is found in the adherens junction. It localises to the tight junction. Functionally, scaffolding protein that regulates epithelial cell polarity by connecting ARF6 activation with the PAR3 complex. Plays a redundant role with FRMD4B in epithelial polarization. May regulate MAPT secretion by activating ARF6-signaling. This Mus musculus (Mouse) protein is FERM domain-containing protein 4A (Frmd4a).